A 379-amino-acid chain; its full sequence is Chaperone protein DnaJ (379 aa).

Residues 5–69 (EFYDRLGVSK…QKRAAYDQYG (65 aa)) enclose the J domain. The CR-type zinc-finger motif lies at 135–217 (GAEKEVSYNR…CHGTGHEKKT (83 aa)). Zn(2+) contacts are provided by C148, C151, C165, C168, C191, C194, C205, and C208. CXXCXGXG motif repeat units follow at residues 148-155 (CHTCSGSG), 165-172 (CQKCHGSG), 191-198 (CDVCQGSG), and 205-212 (CPTCHGTG).

The protein belongs to the DnaJ family. As to quaternary structure, homodimer. Requires Zn(2+) as cofactor.

It is found in the cytoplasm. Participates actively in the response to hyperosmotic and heat shock by preventing the aggregation of stress-denatured proteins and by disaggregating proteins, also in an autonomous, DnaK-independent fashion. Unfolded proteins bind initially to DnaJ; upon interaction with the DnaJ-bound protein, DnaK hydrolyzes its bound ATP, resulting in the formation of a stable complex. GrpE releases ADP from DnaK; ATP binding to DnaK triggers the release of the substrate protein, thus completing the reaction cycle. Several rounds of ATP-dependent interactions between DnaJ, DnaK and GrpE are required for fully efficient folding. Also involved, together with DnaK and GrpE, in the DNA replication of plasmids through activation of initiation proteins. The sequence is that of Chaperone protein DnaJ from Streptococcus agalactiae serotype III (strain NEM316).